Consider the following 262-residue polypeptide: Spindlin-1 (262 aa).

The tract at residues 1–49 is disordered; sequence MKTPFGKTPGQRSRADAGHAGVSANMMKKRTSHKKHRTSVGPSKPVSQP. Residues lysine 7 and lysine 28 each participate in a glycyl lysine isopeptide (Lys-Gly) (interchain with G-Cter in SUMO2) cross-link. Residues 27 to 38 are compositionally biased toward basic residues; it reads MKKRTSHKKHRT. Lysine 44 carries the post-translational modification N6-acetyllysine; alternate. Lysine 44 participates in a covalent cross-link: Glycyl lysine isopeptide (Lys-Gly) (interchain with G-Cter in SUMO2); alternate. Positions 53–116 are tudor-like domain 1; it reads IVGCRIQHGW…RVSALEVLPD (64 aa). Residues 93-98 are histone H3K4me3 and H3R8me2a binding; it reads GFDCVY. Serine 109 and serine 124 each carry phosphoserine; by AURKA. The interval 132–193 is tudor-like domain 2; the sequence is MIGKAVEHMF…DYKEGDLRIM (62 aa). Residue glutamate 142 is a region of interest, histone H3K4me3 and H3R8me2a binding. Residue serine 199 is modified to Phosphoserine. Residues 213 to 262 are tudor-like domain 3; that stretch reads LVGKQVEYAKEDGSKRTGMVIHQVEAKPSVYFIKFDDDFHIYVYDLVKTS. The histone H3K4me3 and H3R8me2a binding stretch occupies residues 250 to 252; that stretch reads DFH.

The protein belongs to the SPIN/STSY family. In terms of assembly, homodimer; may form higher-order oligomers. Interacts with TCF7L2/TCF4; the interaction is direct. Interacts with HABP4 and SERBP1. Interacts with SPINDOC; SPINDOC stabilizes SPIN1 and enhances its association with bivalent H3K4me3K9me3 mark. Interacts with SPOCD1; promoting recruitment of PIWIL4 and SPOCD1 to transposons. In terms of processing, phosphorylated during oocyte meiotic maturation.

It is found in the nucleus. Its subcellular location is the nucleolus. Its function is as follows. Chromatin reader that specifically recognizes and binds histone H3 both trimethylated at 'Lys-4' and 'Lys-9' (H3K4me3K9me3) and is involved in piRNA-mediated retrotransposon silencing during spermatogenesis. Plays a key role in the initiation of the PIWIL4-piRNA pathway, a pathway that directs transposon DNA methylation and silencing in the male embryonic germ cells, by promoting recruitment of DNA methylation machinery to transposons: binds young, but not old, LINE1 transposons, which are specifically marked with H3K4me3K9me3, and promotes the recruitment of PIWIL4 and SPOCD1 to transposons, leading to piRNA-directed DNA methylation. Also recognizes and binds histone H3 both trimethylated at 'Lys-4' and asymmetrically dimethylated at 'Arg-8' (H3K4me3 and H3R8me2a) and acts as an activator of Wnt signaling pathway downstream of PRMT2. Overexpression induces metaphase arrest and chromosomal instability. Overexpression induces metaphase arrest and chromosomal instability. Localizes to active rDNA loci and promotes the expression of rRNA genes. May play a role in cell-cycle regulation during the transition from gamete to embryo. Involved in oocyte meiotic resumption, a process that takes place before ovulation to resume meiosis of oocytes blocked in prophase I: may act by regulating maternal transcripts to control meiotic resumption. In Rattus norvegicus (Rat), this protein is Spindlin-1 (Spin1).